Here is a 145-residue protein sequence, read N- to C-terminus: Transmembrane protein 216 (145 aa).

The next 4 membrane-spanning stretches (helical) occupy residues 22–42 (ILFF…LFIF), 56–76 (LVLD…RLFF), 89–109 (LSIS…YLLL), and 122–142 (GILL…LAAF).

As to quaternary structure, part of the tectonic-like complex (also named B9 complex). Interacts with TMEM107.

Its subcellular location is the membrane. The protein resides in the cytoplasm. The protein localises to the cytoskeleton. It localises to the cilium basal body. Part of the tectonic-like complex which is required for tissue-specific ciliogenesis and may regulate ciliary membrane composition. The protein is Transmembrane protein 216 (TMEM216) of Homo sapiens (Human).